The following is a 328-amino-acid chain: Stress response kinase A (328 aa).

D201 serves as the catalytic Proton acceptor. Positions 206 and 217 each coordinate Mg(2+). D217 is an active-site residue.

Belongs to the SrkA/RdoA protein kinase family. Monomer. Mg(2+) serves as cofactor.

Its subcellular location is the cytoplasm. It catalyses the reaction L-seryl-[protein] + ATP = O-phospho-L-seryl-[protein] + ADP + H(+). The enzyme catalyses L-threonyl-[protein] + ATP = O-phospho-L-threonyl-[protein] + ADP + H(+). Its function is as follows. A protein kinase that phosphorylates Ser and Thr residues. Probably acts to suppress the effects of stress linked to accumulation of reactive oxygen species. Probably involved in the extracytoplasmic stress response. Also has a role in LPS synthesis, through regulation of the galETK expression. In terms of biological role, a protein kinase that phosphorylates Ser and Thr residues. Probably acts to suppress the effects of stress linked to accumulation of reactive oxygen species. Probably involved in the extracytoplasmic stress response. In Shigella flexneri, this protein is Stress response kinase A.